The chain runs to 592 residues: A-type ATP synthase subunit A (592 aa).

233 to 240 contributes to the ATP binding site; sequence GPFGSGKT.

Belongs to the ATPase alpha/beta chains family. Has multiple subunits with at least A(3), B(3), C, D, E, F, H, I and proteolipid K(x).

The protein localises to the cell membrane. The catalysed reaction is ATP + H2O + 4 H(+)(in) = ADP + phosphate + 5 H(+)(out). Component of the A-type ATP synthase that produces ATP from ADP in the presence of a proton gradient across the membrane. The A chain is the catalytic subunit. This chain is A-type ATP synthase subunit A, found in Saccharolobus solfataricus (strain ATCC 35092 / DSM 1617 / JCM 11322 / P2) (Sulfolobus solfataricus).